The primary structure comprises 660 residues: MSQLQMKLLRRKIEKRNAKLRQRNLKLQETSDTSLSQPQNGDVPKETGKGGKVKKALKRSVPVDSAEAQSGGMPEETLENGKVKKSPQKLTTLANGEAAPTPPPDSEVKKKKKKKRKMANDAGPDTKKAKTEESAEACEEPEDDVKKADDSEVPSLPLGLTGAFEDTSFASLSNLVNENTLKAIEEMGFKRMTEIQHKSIRPLLEGRDLLAAAKTGSGKTLAFLIPVIELIVKLKFMPRNGTGVLILSPTRELAMQTFGVLKELMTHHVHTYGLIMGGSNRSAEVQKLLNGINIIVATPGRLLDHMQNTPGFMYKNLQCLVIDEADRILDVGFEEELKQIIKLLPARRQTMLFSATQTRKVEDLARISLKKEPLYVGVDDDKEVATVDGLEQGYVVCPSEKRFLLLFTFLKKNRKKKVMVFFSSCMSVKYHYELLNYIDLPVLAIHGKQKQNKRTTTFFQFCNADSGILLCTDVAARGLDIPEVDWIVQYDPPDDPKEYIHRVGRTARGLNGRGHALLILRPEELGFLRYLKQSKVPLNQFDFSWSKVSDIQSQLEKLIEKNYFLHKSAQEAYKSYIRAYDSHSLKQIFNVNNLNLPQVALSFGFKVPPFVDLNVSSHDGKLKKRGGGGGFGYQKTKKVEKSKIFKHISKKPADRRQFSH.

Positions 16 to 153 (RNAKLRQRNL…DVKKADDSEV (138 aa)) are disordered. Polar residues predominate over residues 25 to 40 (LKLQETSDTSLSQPQN). The segment covering 124–133 (PDTKKAKTEE) has biased composition (basic and acidic residues). Acidic residues predominate over residues 134–143 (SAEACEEPED). A Q motif motif is present at residues 169 to 197 (FASLSNLVNENTLKAIEEMGFKRMTEIQH). A Helicase ATP-binding domain is found at 200 to 375 (IRPLLEGRDL…RISLKKEPLY (176 aa)). ATP is bound at residue 213 to 220 (AKTGSGKT). The DEAD box signature appears at 323–326 (DEAD). The Helicase C-terminal domain occupies 389–559 (GLEQGYVVCP…DIQSQLEKLI (171 aa)).

Belongs to the DEAD box helicase family. DDX18/HAS1 subfamily. In terms of assembly, interacts with NOL8; the interaction is RNA-dependent. Interacts with PRC2 complex components EZH2, SUZ2 and JARID2; these interactions prevent deposition of the repressive H3K27me3 mark onto rDNA in pluripotent cells.

It localises to the nucleus. It is found in the nucleolus. The protein localises to the chromosome. The enzyme catalyses ATP + H2O = ADP + phosphate + H(+). Functionally, ATP-dependent RNA helicase that plays a role in the regulation of R-loop homeostasis in both endogenous R-loop-prone regions and at sites of DNA damage. At endogenous loci such as actively transcribed genes, may act as a helicase to resolve the formation of R-loop during transcription and prevent the interference of R-loop with DNA-replication machinery. Also participates in the removal of DNA-lesion-associated R-loop. Plays an essential role for establishing pluripotency during embryogenesis and for pluripotency maintenance in embryonic stem cells. Mechanistically, prevents the polycomb repressive complex 2 (PRC2) from accessing rDNA loci and protects the active chromatin status in nucleolus. This chain is ATP-dependent RNA helicase DDX18 (Ddx18), found in Mus musculus (Mouse).